Here is a 394-residue protein sequence, read N- to C-terminus: Junctional adhesion molecule-like (394 aa).

Positions 1 to 19 (MFCPLKLILLPVLLDYSLG) are cleaved as a signal peptide. Ig-like V-type domains follow at residues 20 to 132 (LNDL…KAVV) and 137 to 250 (PEEP…IVLH). Over 20-275 (LNDLNVSPPE…RPLVLGGNQL (256 aa)) the chain is Extracellular. 2 cysteine pairs are disulfide-bonded: C42/C116 and C155/C234. N-linked (GlcNAc...) asparagine glycosylation is found at N76 and N231. A helical membrane pass occupies residues 276–296 (VIIVGIVCATILLLPVLILIV). Residues 297–394 (KKTCGNKSSV…GGMPKTQQAF (98 aa)) lie on the Cytoplasmic side of the membrane. The interval 369 to 394 (PSLRSDRNNSLEKKSGGGMPKTQQAF) is disordered. Residues 372-383 (RSDRNNSLEKKS) show a composition bias toward basic and acidic residues.

Belongs to the immunoglobulin superfamily. Homodimer; active form in leukocyte-endothelial cell adhesion. Interacts (homodimeric form) with CXADR. Interacts (via cytoplasmic domain) with the PI3 kinase; upon CXADR-binding. Interacts with ITGA4 and ITGB1; integrin alpha-4/beta-1 may regulate leukocyte to endothelial cells adhesion by controlling JAML homodimerization. Expression is restricted to the hematopoietic tissues with the exception of liver. Expressed in fetal liver, spleen and thymus. Preferentially expressed by mature leukocytes (at protein level).

The protein localises to the cell membrane. Its subcellular location is the cell junction. Its function is as follows. Transmembrane protein of the plasma membrane of leukocytes that control their migration and activation through interaction with CXADR, a plasma membrane receptor found on adjacent epithelial and endothelial cells. The interaction between both receptors mediates the activation of gamma-delta T-cells, a subpopulation of T-cells residing in epithelia and involved in tissue homeostasis and repair. Upon epithelial CXADR-binding, JAML induces downstream cell signaling events in gamma-delta T-cells through PI3-kinase and MAP kinases. It results in proliferation and production of cytokines and growth factors by T-cells that in turn stimulate epithelial tissues repair. It also controls the transmigration of leukocytes within epithelial and endothelial tissues through adhesive interactions with epithelial and endothelial CXADR. The protein is Junctional adhesion molecule-like of Homo sapiens (Human).